Reading from the N-terminus, the 581-residue chain is Laccase-2 (581 aa).

The N-terminal stretch at 1–19 (MKYSTVFTALTALFAQASA) is a signal peptide. Plastocyanin-like domains are found at residues 74–191 (SVEN…GPAT) and 197–353 (DVGA…YDSS). Asn-77, Asn-93, and Asn-120 each carry an N-linked (GlcNAc...) asparagine glycan. 4 residues coordinate Cu cation: His-125, His-127, His-169, and His-171. The cysteines at positions 146 and 562 are disulfide-linked. N-linked (GlcNAc...) asparagine glycans are attached at residues Asn-232, Asn-283, Asn-343, Asn-408, Asn-427, and Asn-441. One can recognise a Plastocyanin-like 3 domain in the interval 413–547 (LLDWSSPTTL…AMQFVESQSS (135 aa)). His-464, His-467, His-469, His-526, Cys-527, His-528, and His-532 together coordinate Cu cation.

This sequence belongs to the multicopper oxidase family. Cu cation is required as a cofactor.

The protein localises to the secreted. The catalysed reaction is 4 hydroquinone + O2 = 4 benzosemiquinone + 2 H2O. Lignin degradation and detoxification of lignin-derived products. The protein is Laccase-2 (lcc2) of Botryotinia fuckeliana (Noble rot fungus).